The following is a 534-amino-acid chain: Arginine--tRNA ligase (534 aa).

The 'HIGH' region motif lies at 120–130 (ANPTGFLHLGH).

Belongs to the class-I aminoacyl-tRNA synthetase family. In terms of assembly, monomer.

Its subcellular location is the cytoplasm. It carries out the reaction tRNA(Arg) + L-arginine + ATP = L-arginyl-tRNA(Arg) + AMP + diphosphate. The protein is Arginine--tRNA ligase of Mesomycoplasma hyopneumoniae (strain J / ATCC 25934 / NCTC 10110) (Mycoplasma hyopneumoniae).